Consider the following 512-residue polypeptide: Histidine ammonia-lyase (512 aa).

A cross-link (5-imidazolinone (Cys-Gly)) is located at residues 143-145; sequence CSG. At serine 144 the chain carries 2,3-didehydroalanine (Ser).

Belongs to the PAL/histidase family. In terms of processing, contains an active site 4-methylidene-imidazol-5-one (MIO), which is formed autocatalytically by cyclization and dehydration of residues Cys-Ser-Gly.

The protein resides in the cytoplasm. It catalyses the reaction L-histidine = trans-urocanate + NH4(+). The protein operates within amino-acid degradation; L-histidine degradation into L-glutamate; N-formimidoyl-L-glutamate from L-histidine: step 1/3. This Streptomyces coelicolor (strain ATCC BAA-471 / A3(2) / M145) protein is Histidine ammonia-lyase.